We begin with the raw amino-acid sequence, 180 residues long: Large ribosomal subunit protein uL22 (180 aa).

A disordered region spans residues 111–180; it reads VVVESRPAKD…ETSDAKGGSD (70 aa). Basic residues predominate over residues 142–166; that stretch reads PAKKAPAKKAPAKKAPAKTAAKKTP. A compositionally biased stretch (basic and acidic residues) spans 171–180; the sequence is ETSDAKGGSD.

This sequence belongs to the universal ribosomal protein uL22 family. In terms of assembly, part of the 50S ribosomal subunit.

Functionally, this protein binds specifically to 23S rRNA; its binding is stimulated by other ribosomal proteins, e.g. L4, L17, and L20. It is important during the early stages of 50S assembly. It makes multiple contacts with different domains of the 23S rRNA in the assembled 50S subunit and ribosome. In terms of biological role, the globular domain of the protein is located near the polypeptide exit tunnel on the outside of the subunit, while an extended beta-hairpin is found that lines the wall of the exit tunnel in the center of the 70S ribosome. This chain is Large ribosomal subunit protein uL22, found in Mycobacterium avium (strain 104).